We begin with the raw amino-acid sequence, 395 residues long: Galactokinase (395 aa).

39–42 lines the substrate pocket; sequence EHTD. Residues Ser-73 and 127 to 133 contribute to the ATP site; that span reads GAGLSSS. Ser-133 and Glu-165 together coordinate Mg(2+). Residue Asp-177 is the Proton acceptor of the active site. Tyr-227 contacts substrate.

It belongs to the GHMP kinase family. GalK subfamily.

The protein resides in the cytoplasm. The enzyme catalyses alpha-D-galactose + ATP = alpha-D-galactose 1-phosphate + ADP + H(+). It functions in the pathway carbohydrate metabolism; galactose metabolism. Functionally, catalyzes the transfer of the gamma-phosphate of ATP to D-galactose to form alpha-D-galactose-1-phosphate (Gal-1-P). This Halalkalibacterium halodurans (strain ATCC BAA-125 / DSM 18197 / FERM 7344 / JCM 9153 / C-125) (Bacillus halodurans) protein is Galactokinase.